A 46-amino-acid chain; its full sequence is Mu-segestritoxin-Sf1g (46 aa).

Disulfide bonds link cysteine 3-cysteine 19, cysteine 10-cysteine 22, cysteine 18-cysteine 42, and cysteine 24-cysteine 40. Residues 31 to 33 are keys region for toxin activity; the sequence is RPW.

It belongs to the neurotoxin 16 (SFI) family. In terms of tissue distribution, expressed by the venom gland.

It localises to the secreted. Insecticidal toxin. It inhibits insect voltage-gated sodium channels (Nav) by partially blocking the channel pore in DUM neurons from the American cockroach, not by acting as a gating modifier. The inhibition is only partially reversible after prolonged washout. In vivo, the toxin causes flaccid paralysis followed by death when injected into Heliothis virescens larvae. It also causes uncoordinated movements followed by full paralysis to sheep blowflies (Lucilia cuprina). When the toxin is fused to snowdrop lectin, it is orally active against larvae of the tomato moth (Laconobia oleracea), the rice brown planthopper (Nilaparvata lugens), and the peach-potato aphid (Myzus persicae). This chain is Mu-segestritoxin-Sf1g, found in Segestria florentina (Tube-web spider).